A 406-amino-acid polypeptide reads, in one-letter code: Cysteine desulfurase (406 aa).

Residue Lys-226 is modified to N6-(pyridoxal phosphate)lysine. Cys-364 (cysteine persulfide intermediate) is an active-site residue.

The protein belongs to the class-V pyridoxal-phosphate-dependent aminotransferase family. Csd subfamily. As to quaternary structure, homodimer. Interacts with SufE and the SufBCD complex composed of SufB, SufC and SufD. The interaction with SufE is required to mediate the direct transfer of the sulfur atom from the S-sulfanylcysteine. Pyridoxal 5'-phosphate is required as a cofactor.

It is found in the cytoplasm. The catalysed reaction is (sulfur carrier)-H + L-cysteine = (sulfur carrier)-SH + L-alanine. It carries out the reaction L-selenocysteine + AH2 = hydrogenselenide + L-alanine + A + H(+). It functions in the pathway cofactor biosynthesis; iron-sulfur cluster biosynthesis. Cysteine desulfurases mobilize the sulfur from L-cysteine to yield L-alanine, an essential step in sulfur metabolism for biosynthesis of a variety of sulfur-containing biomolecules. Component of the suf operon, which is activated and required under specific conditions such as oxidative stress and iron limitation. Acts as a potent selenocysteine lyase in vitro, that mobilizes selenium from L-selenocysteine. Selenocysteine lyase activity is however unsure in vivo. The polypeptide is Cysteine desulfurase (Escherichia coli O45:K1 (strain S88 / ExPEC)).